A 390-amino-acid polypeptide reads, in one-letter code: Galactokinase (390 aa).

Residue 33-36 (EHTD) coordinates substrate. Residues Ser-67 and 124 to 130 (GSGLSSS) contribute to the ATP site. Positions 130 and 162 each coordinate Mg(2+). Asp-174 serves as the catalytic Proton acceptor. A substrate-binding site is contributed by Tyr-224.

The protein belongs to the GHMP kinase family. GalK subfamily.

It is found in the cytoplasm. The enzyme catalyses alpha-D-galactose + ATP = alpha-D-galactose 1-phosphate + ADP + H(+). It functions in the pathway carbohydrate metabolism; galactose metabolism. Catalyzes the transfer of the gamma-phosphate of ATP to D-galactose to form alpha-D-galactose-1-phosphate (Gal-1-P). The polypeptide is Galactokinase (Streptococcus suis (strain 05ZYH33)).